The chain runs to 586 residues: Proteasome-associated ATPase (586 aa).

Positions 11-76 (AWRELEAVRA…LREEVDRLGQ (66 aa)) form a coiled coil. Residue 273-278 (GCGKTL) participates in ATP binding. The tract at residues 585–586 (YL) is docks into pockets in the proteasome alpha-ring.

It belongs to the AAA ATPase family. As to quaternary structure, homohexamer. Assembles into a hexameric ring structure that caps the 20S proteasome core. Strongly interacts with the prokaryotic ubiquitin-like protein Pup through a hydrophobic interface; the interacting region of ARC lies in its N-terminal coiled-coil domain. There is one Pup binding site per ARC hexamer ring. Upon ATP-binding, the C-terminus of ARC interacts with the alpha-rings of the proteasome core, possibly by binding to the intersubunit pockets.

It functions in the pathway protein degradation; proteasomal Pup-dependent pathway. Functionally, ATPase which is responsible for recognizing, binding, unfolding and translocation of pupylated proteins into the bacterial 20S proteasome core particle. May be essential for opening the gate of the 20S proteasome via an interaction with its C-terminus, thereby allowing substrate entry and access to the site of proteolysis. Thus, the C-termini of the proteasomal ATPase may function like a 'key in a lock' to induce gate opening and therefore regulate proteolysis. The protein is Proteasome-associated ATPase of Nocardia farcinica (strain IFM 10152).